A 708-amino-acid chain; its full sequence is MKYLFIAIILILYCSFTKADQKKFLVNMYDNDPLFSPDFENANGAQTGLVKKKLGSDGKPIPANYDMKDPNGNYYIKNATTFKSWFNEVAGVSILVPFELVLTQTAGSQNYYSYSNTSFFPLNELGWYNPSIKGDYEFKKYQDSNKKEQNFHFCMHASFIMSTNCKEVFKFKGDDDVWVFINDVLVLDIGGVHGVQDGTVDMANLPEKIHDSTNSKLGNCKNGTYPFDFFYCERHTKASNCLFETNMGFTCSYYDYCGICNGKGECCTDVKLNQCYTKKCPLPNSLPNGATNYQDYMTIVPTNTCGGTDKCKIYSCNNSTGCEFKQKSCDDGDKCTKDACDSKTGYCSNIPTNPSVVTSCLKSGCDSTTGNYSTPTNCDDKDPCTIDSCINGQGCVHTKACDDEDPCTTDSCSADGKCTHTAIAKCNSDCPSCPSKKCKITSCSEDSGACNYVDMVFASPSECYKATCDPETEEAIYSPIDSSCDTSDSCFTAQCNLNKTCTRVPAINCDDNNECTTDSCSGGSCSNTAIACDDNDPCTIDTCSPSEGCIFTPIVCEQTSLCNTFTCSVGKCVPTPITCSSSVKCQDSICREGVGCVYFNRTCPPDDDCSSAYCSMETGKCISKAYDPLPFSCQSTAVKVGVGIGAAAAAGIAIGGAVAAGLAIFGGKKAYDTWKTSRGNVMTGSQSNPLYTQNQNNGNNPLYSAPAE.

A signal peptide spans Met1–Ala19. Over Asp20–Gly643 the chain is Extracellular. N-linked (GlcNAc...) asparagine glycosylation is found at Asn78, Asn116, Asn222, Asn317, Asn318, Asn371, Asn498, and Asn600. The 161-residue stretch at Thr103–Lys263 folds into the PA14 domain. A helical transmembrane segment spans residues Ile644–Ile664. Residues Phe665–Glu708 are Cytoplasmic-facing. Residues Met682 to Leu702 are compositionally biased toward polar residues. The segment at Met682–Glu708 is disordered.

Belongs to the prespore-cell-inducing factor family. Forms a complex with dicB.

The protein localises to the membrane. Its subcellular location is the secreted. Its function is as follows. Acts as a quorum sensing protein regulating discoidin gene expression during growth and development. D.discoideum is a single-celled amoebae and switches to multicellular development when food becomes limited. As the growing cells reach a high density, they begin expressing discoidin genes. The ability of psiF/dicA to induce discoidin gene expression when present in conditioned medium, suggests that it allows cells to sense their local density. In Dictyostelium discoideum (Social amoeba), this protein is Protein psiF (psiF).